Here is a 128-residue protein sequence, read N- to C-terminus: Mediator of RNA polymerase II transcription subunit 31-A (128 aa).

The protein belongs to the Mediator complex subunit 31 family. In terms of assembly, component of the Mediator complex.

The protein resides in the nucleus. Functionally, component of the Mediator complex, a coactivator involved in the regulated transcription of nearly all RNA polymerase II-dependent genes. Mediator functions as a bridge to convey information from gene-specific regulatory proteins to the basal RNA polymerase II transcription machinery. Mediator is recruited to promoters by direct interactions with regulatory proteins and serves as a scaffold for the assembly of a functional preinitiation complex with RNA polymerase II and the general transcription factors. In Xenopus laevis (African clawed frog), this protein is Mediator of RNA polymerase II transcription subunit 31-A (med31-a).